The following is a 502-amino-acid chain: Lysine--tRNA ligase (502 aa).

Positions 412 and 419 each coordinate Mg(2+).

This sequence belongs to the class-II aminoacyl-tRNA synthetase family. Homodimer. The cofactor is Mg(2+).

It localises to the cytoplasm. It carries out the reaction tRNA(Lys) + L-lysine + ATP = L-lysyl-tRNA(Lys) + AMP + diphosphate. In Nitrosomonas europaea (strain ATCC 19718 / CIP 103999 / KCTC 2705 / NBRC 14298), this protein is Lysine--tRNA ligase.